The sequence spans 161 residues: Probable chemoreceptor glutamine deamidase CheD (161 aa).

The protein belongs to the CheD family.

It catalyses the reaction L-glutaminyl-[protein] + H2O = L-glutamyl-[protein] + NH4(+). Its function is as follows. Probably deamidates glutamine residues to glutamate on methyl-accepting chemotaxis receptors (MCPs), playing an important role in chemotaxis. The polypeptide is Probable chemoreceptor glutamine deamidase CheD (Trichlorobacter lovleyi (strain ATCC BAA-1151 / DSM 17278 / SZ) (Geobacter lovleyi)).